We begin with the raw amino-acid sequence, 888 residues long: Alanine--tRNA ligase (888 aa).

Residues histidine 573, histidine 577, cysteine 676, and histidine 680 each coordinate Zn(2+).

It belongs to the class-II aminoacyl-tRNA synthetase family. Requires Zn(2+) as cofactor.

It localises to the cytoplasm. It carries out the reaction tRNA(Ala) + L-alanine + ATP = L-alanyl-tRNA(Ala) + AMP + diphosphate. Functionally, catalyzes the attachment of alanine to tRNA(Ala) in a two-step reaction: alanine is first activated by ATP to form Ala-AMP and then transferred to the acceptor end of tRNA(Ala). Also edits incorrectly charged Ser-tRNA(Ala) and Gly-tRNA(Ala) via its editing domain. In Corynebacterium diphtheriae (strain ATCC 700971 / NCTC 13129 / Biotype gravis), this protein is Alanine--tRNA ligase.